The primary structure comprises 620 residues: Probable potassium transport system protein Kup (620 aa).

The next 12 membrane-spanning stretches (helical) occupy residues 11–31 (LAFL…LYAF), 51–71 (ILSL…LLLV), 100–120 (IAML…VITP), 138–158 (LAPY…AVQA), 167–187 (FFAP…AHAI), 202–222 (AVHF…LVVL), 246–266 (WFAL…AYLL), 288–308 (LILL…SGIF), 334–354 (GQIY…FVML), 364–384 (AAYG…LVLV), 396–416 (VVTI…STST), and 418–438 (LMEG…VMYI).

This sequence belongs to the HAK/KUP transporter (TC 2.A.72) family.

It is found in the cell inner membrane. It catalyses the reaction K(+)(in) + H(+)(in) = K(+)(out) + H(+)(out). Transport of potassium into the cell. Likely operates as a K(+):H(+) symporter. The chain is Probable potassium transport system protein Kup from Vibrio cholerae serotype O1 (strain ATCC 39315 / El Tor Inaba N16961).